The primary structure comprises 68 residues: uncharacterized protein (68 aa).

Residues 2-67 (KTITLNIKGI…VIEDAGFDAT (66 aa)) form the HMA domain. A metal cation contacts are provided by Cys-13 and Cys-16.

This is an uncharacterized protein from Haemophilus influenzae (strain ATCC 51907 / DSM 11121 / KW20 / Rd).